The primary structure comprises 381 residues: Alcohol dehydrogenase-like 6 (381 aa).

Zn(2+) contacts are provided by C53, S55, H72, C102, C105, C108, C116, and C179. Residues S55 and H72 each contribute to the an alcohol site. S55 provides a ligand contact to NAD(+). Residues 204–209 (GLGTVG), D228, K233, 297–299 (LGV), F324, and R374 contribute to the NAD(+) site.

The protein belongs to the zinc-containing alcohol dehydrogenase family. Class-III subfamily. In terms of assembly, homodimer. Zn(2+) serves as cofactor.

It localises to the cytoplasm. The catalysed reaction is a primary alcohol + NAD(+) = an aldehyde + NADH + H(+). It carries out the reaction a secondary alcohol + NAD(+) = a ketone + NADH + H(+). The chain is Alcohol dehydrogenase-like 6 from Arabidopsis thaliana (Mouse-ear cress).